A 356-amino-acid polypeptide reads, in one-letter code: Tyrosine recombinase XerS (356 aa).

In terms of domain architecture, Core-binding (CB) spans I16–T121. Residues A169–D354 form the Tyr recombinase domain. Catalysis depends on residues R210, K234, H306, R309, and H332. The O-(3'-phospho-DNA)-tyrosine intermediate role is filled by Y341.

Belongs to the 'phage' integrase family. XerS subfamily.

The protein localises to the cytoplasm. Its activity is regulated as follows. FtsK is required for recombination. Site-specific tyrosine recombinase, which acts by catalyzing the cutting and rejoining of the recombining DNA molecules. Essential to convert dimers of the bacterial chromosome into monomers to permit their segregation at cell division. This is Tyrosine recombinase XerS from Streptococcus pyogenes serotype M5 (strain Manfredo).